A 138-amino-acid polypeptide reads, in one-letter code: MRILWIVAVCLIGAEGHLSQFGDMINKKTGIFGIMSYIYYGCYCGWGGKGKPLDATDRCCFVHDCCYGRVNGCDPKMGTYSYSFQNGDIVCGGDDPCLRAVCECDRVAAICFGENMNTYDKKYMLYSLFDCKEESEQC.

A signal peptide spans 1–16 (MRILWIVAVCLIGAEG). Cystine bridges form between C42/C131, C44/C60, C59/C111, C65/C138, C66/C104, C73/C97, and C91/C102. Residues Y43, G45, and G47 each contribute to the Ca(2+) site. H63 is a catalytic residue. D64 contributes to the Ca(2+) binding site. D105 is a catalytic residue.

It belongs to the phospholipase A2 family. Group II subfamily. D49 sub-subfamily. Ca(2+) serves as cofactor. As to expression, expressed by the venom gland.

Its subcellular location is the secreted. It carries out the reaction a 1,2-diacyl-sn-glycero-3-phosphocholine + H2O = a 1-acyl-sn-glycero-3-phosphocholine + a fatty acid + H(+). In terms of biological role, snake venom phospholipase A2 (PLA2) that has enzymatic activity but is non-toxic. PLA2 catalyzes the calcium-dependent hydrolysis of the 2-acyl groups in 3-sn-phosphoglycerides. This Vipera ammodytes ammodytes (Western sand viper) protein is Acidic phospholipase A2 ammodytin I1.